The sequence spans 598 residues: Probable translation initiation factor IF-2 (598 aa).

The region spanning L3–K225 is the tr-type G domain. Residues G12–T19 are G1. G12–T19 is a GTP binding site. Residues G37 to H41 form a G2 region. The segment at D76–G79 is G3. GTP contacts are provided by residues D76–H80 and N130–D133. The tract at residues N130–D133 is G4. Residues S200–M202 are G5.

Belongs to the TRAFAC class translation factor GTPase superfamily. Classic translation factor GTPase family. IF-2 subfamily.

Its function is as follows. Function in general translation initiation by promoting the binding of the formylmethionine-tRNA to ribosomes. Seems to function along with eIF-2. This Methanococcus maripaludis (strain C5 / ATCC BAA-1333) protein is Probable translation initiation factor IF-2.